The following is a 68-amino-acid chain: Cytotoxic linear peptide IsCT (68 aa).

An N-terminal signal peptide occupies residues 1-23 (MKTQFAILLVALVLFQMFAQSDA). Phe36 is modified (phenylalanine amide). A propeptide spanning residues 40–68 (GLSDLDGLDELFDGEISKADRDFLRELMR) is cleaved from the precursor.

The protein belongs to the non-disulfide-bridged peptide (NDBP) superfamily. Short antimicrobial peptide (group 4) family. IsCTf is an enzymatic proteolytic cleavage product of IsCT by the proteases present in the venom. Expressed by the venom gland.

The protein localises to the secreted. Its subcellular location is the target cell membrane. In terms of biological role, shows weak hemolytic activity and antibacterial activity against both Gram-positive and Gram-negative bacteria probably by forming pores in the cell membrane. IsCT adopts an amphipathic alpha-helical structure. Functionally, shows neither hemolytic, nor antibacterial activities, probably because it cannot adopt amphipathic alpha-helical structure. The protein is Cytotoxic linear peptide IsCT of Opisthacanthus madagascariensis (Scorpion).